We begin with the raw amino-acid sequence, 66 residues long: Large ribosomal subunit protein bL35 (66 aa).

The segment covering 1–26 (MPKMKTHRGSAKRFKKTGSGKLKRSH) has biased composition (basic residues). Positions 1–48 (MPKMKTHRGSAKRFKKTGSGKLKRSHAYTSHLFANKSQKQKRKLRKSA) are disordered.

This sequence belongs to the bacterial ribosomal protein bL35 family. As to quaternary structure, part of the 50S ribosomal subunit.

This chain is Large ribosomal subunit protein bL35, found in Bacillus subtilis (strain 168).